Consider the following 113-residue polypeptide: Probable mesentericin-Y105 immunity protein (113 aa).

It belongs to the immunity protein EntA family.

Imparts immunity to mesentericin-Y105 to naturally sensitive host strains. The protein is Probable mesentericin-Y105 immunity protein (mesI) of Leuconostoc mesenteroides.